A 185-amino-acid chain; its full sequence is Ribosome-recycling factor (185 aa).

Belongs to the RRF family.

It is found in the cytoplasm. Its function is as follows. Responsible for the release of ribosomes from messenger RNA at the termination of protein biosynthesis. May increase the efficiency of translation by recycling ribosomes from one round of translation to another. This chain is Ribosome-recycling factor, found in Vibrio parahaemolyticus serotype O3:K6 (strain RIMD 2210633).